A 344-amino-acid chain; its full sequence is Flavonoid 7-O-methyltransferase 1B (344 aa).

Asp-211 lines the S-adenosyl-L-methionine pocket. His-249 (proton acceptor) is an active-site residue.

The protein belongs to the class I-like SAM-binding methyltransferase superfamily. Cation-independent O-methyltransferase family. In terms of assembly, homodimer.

It catalyses the reaction scutellarein + S-adenosyl-L-methionine = scutellarein 7-methyl ether + S-adenosyl-L-homocysteine. It carries out the reaction 4',7,8-trihydroxyflavone + S-adenosyl-L-methionine = 4',8-dihydroxy-7-methoxyflavone + S-adenosyl-L-homocysteine. The catalysed reaction is isorhamnetin + S-adenosyl-L-methionine = rhamnacene + S-adenosyl-L-homocysteine + H(+). The enzyme catalyses kaempferol + S-adenosyl-L-methionine = kaempferol 7-methyl ether + S-adenosyl-L-homocysteine + H(+). It catalyses the reaction (2S)-naringenin + S-adenosyl-L-methionine = (2S)-sakuranetin + S-adenosyl-L-homocysteine + H(+). It carries out the reaction quercetin + S-adenosyl-L-methionine = rhamnetin + S-adenosyl-L-homocysteine + H(+). The catalysed reaction is apigenin + S-adenosyl-L-methionine = genkwanin + S-adenosyl-L-homocysteine + H(+). The enzyme catalyses luteolin + S-adenosyl-L-methionine = luteolin 7-methyl ether + S-adenosyl-L-homocysteine + H(+). It participates in flavonoid metabolism. Flavonoid 7-O-methyltransferase involved in the biosynthesis of polymethoxylated flavonoids natural products such as pebrellin, aroma compounds which contribute to the flavor of peppermint, and exhibit pharmacological activities such as anti-allergic, anti-oxidant, antibacterial, anti-proliferative, and anti-inflammatory effects. Catalyzes S-adenosylmethionine-dependent regioselective 7-O-methylation of flavonoids; active on various hydroxylated flavonoid substrates, including luteolin (LUT), quercetin, kaempferol, isorhamnetin, apigenin (API), scutellarein (6-hydroxy-apigenin, 6-OH-API, SCU), 7,8,4'-trihydroxy-flavone and naringenin (NAR), and, with a lower efficiency, 7,8,3',4'-tetrahydroxy-flavone, taxifolin and hesperetin. This is Flavonoid 7-O-methyltransferase 1B from Mentha piperita (Peppermint).